Reading from the N-terminus, the 155-residue chain is Transcriptional regulator MraZ (155 aa).

2 consecutive SpoVT-AbrB domains span residues 5–52 (TYEN…SQDR) and 81–124 (SMNL…EPAA).

It belongs to the MraZ family. As to quaternary structure, forms oligomers.

Its subcellular location is the cytoplasm. The protein localises to the nucleoid. In Pelagibacter ubique (strain HTCC1062), this protein is Transcriptional regulator MraZ.